The following is a 487-amino-acid chain: MYLQELLKGIQVEKIIGNMDIDIEDIYFDSRFVTQKSLFICIEGFKTTGSLYINEAIQRGAVAILSEKEIAIEGTTTIKVENSRKALAAVASRFYKFPTNTLKLVGVTGTNGKTSITYMVKSILGYYNINVGLIGTISNWIGNKEIEAVRTTPESLELQKILNEMVEQKVDTCVMEVSSHALELGRVDHTKFTMGIFTNLTPEHLDFHEDMDHYRNAKKKLFYKTTLCNIINVDDIHGKMIAEELKEEQIPLITFGMNQQADVYATDLKINLKGVSFQLHMGQDSKEFHVKIPGLFTVYNAMPSILICYILGLSLEEISIALEAMKGVPGRFEVVEEIQRNSVIIDYAHTPDALENILISTRKFAPKRIITVFGCGGDRDKTKRRIMGEISGKYSDYSIITSDNPRTEEPLKIIEMIEDGIKQVTDQYKIMIDRRCAIEYAMKIAEEKDIIILAGKGHEKTQVIGNEVFYFDDREVALEIARKEGLI.

UDP-N-acetyl-alpha-D-muramoyl-L-alanyl-D-glutamate is bound at residue S30. An ATP-binding site is contributed by 109–115 (GTNGKTS). Residues 151–152 (TT), S178, and R186 each bind UDP-N-acetyl-alpha-D-muramoyl-L-alanyl-D-glutamate. K218 is subject to N6-carboxylysine. Residues R379, 403–406 (DNPR), G455, and E459 contribute to the meso-2,6-diaminopimelate site. The Meso-diaminopimelate recognition motif motif lies at 403-406 (DNPR).

This sequence belongs to the MurCDEF family. MurE subfamily. Requires Mg(2+) as cofactor. Carboxylation is probably crucial for Mg(2+) binding and, consequently, for the gamma-phosphate positioning of ATP.

The protein localises to the cytoplasm. It catalyses the reaction UDP-N-acetyl-alpha-D-muramoyl-L-alanyl-D-glutamate + meso-2,6-diaminopimelate + ATP = UDP-N-acetyl-alpha-D-muramoyl-L-alanyl-gamma-D-glutamyl-meso-2,6-diaminopimelate + ADP + phosphate + H(+). It participates in cell wall biogenesis; peptidoglycan biosynthesis. Its function is as follows. Catalyzes the addition of meso-diaminopimelic acid to the nucleotide precursor UDP-N-acetylmuramoyl-L-alanyl-D-glutamate (UMAG) in the biosynthesis of bacterial cell-wall peptidoglycan. This is UDP-N-acetylmuramoyl-L-alanyl-D-glutamate--2,6-diaminopimelate ligase from Alkaliphilus oremlandii (strain OhILAs) (Clostridium oremlandii (strain OhILAs)).